The following is a 644-amino-acid chain: Exoribonuclease 2 (644 aa).

Residues 189–516 (REDLTALDFV…NHRLLKAVIK (328 aa)) form the RNB domain. One can recognise an S1 motif domain in the interval 561-643 (DTRFAAEIVD…ETRSIIARPV (83 aa)).

The protein belongs to the RNR ribonuclease family. RNase II subfamily.

The protein localises to the cytoplasm. It catalyses the reaction Exonucleolytic cleavage in the 3'- to 5'-direction to yield nucleoside 5'-phosphates.. Functionally, involved in mRNA degradation. Hydrolyzes single-stranded polyribonucleotides processively in the 3' to 5' direction. The protein is Exoribonuclease 2 of Escherichia coli O6:K15:H31 (strain 536 / UPEC).